The sequence spans 124 residues: Type-4 ice-structuring protein (124 aa).

The first 20 residues, Met-1–Ala-20, serve as a signal peptide directing secretion. Position 21 is a pyrrolidone carboxylic acid (Gln-21).

The protein belongs to the apolipoprotein A1/A4/E family.

It localises to the secreted. Its function is as follows. Antifreeze proteins lower the blood freezing point. This Paralichthys olivaceus (Bastard halibut) protein is Type-4 ice-structuring protein.